The following is a 501-amino-acid chain: Lysine--tRNA ligase (501 aa).

2 residues coordinate Mg(2+): Glu404 and Glu411.

This sequence belongs to the class-II aminoacyl-tRNA synthetase family. In terms of assembly, homodimer. Mg(2+) serves as cofactor.

It is found in the cytoplasm. The enzyme catalyses tRNA(Lys) + L-lysine + ATP = L-lysyl-tRNA(Lys) + AMP + diphosphate. The protein is Lysine--tRNA ligase of Campylobacter jejuni subsp. doylei (strain ATCC BAA-1458 / RM4099 / 269.97).